We begin with the raw amino-acid sequence, 573 residues long: Putative cytochrome c oxidase subunit 1-beta (573 aa).

A helical transmembrane segment spans residues 53-73; it reads VIGHLYLATSFGFFLLGGVLA. A Fe(II)-heme a-binding site is contributed by H100. 6 consecutive transmembrane segments (helical) span residues 103–123, 141–161, 188–208, 227–247, 272–292, and 304–324; these read IMML…IMPL, WMYL…GGAA, GLVV…STII, ILFT…ALLM, LFWF…FGIV, and IFGY…SAVV. H278 and Y282 together coordinate Cu cation. Positions 278–282 form a cross-link, 1'-histidyl-3'-tyrosine (His-Tyr); it reads HPEVY. Cu cation contacts are provided by H327 and H328. 2 consecutive transmembrane segments (helical) span residues 329–349 and 373–393; these read MFAT…LIAV and MLWA…GVLI. H411 lines the heme a3 pocket. Transmembrane regions (helical) follow at residues 412 to 432, 447 to 467, and 490 to 510; these read LHYV…YFWW, IHFW…HWLG, and ISSI…YNVW. H413 contacts Fe(II)-heme a.

Belongs to the heme-copper respiratory oxidase family. As to quaternary structure, associates with subunits II, III and IV to form cytochrome c oxidase. Cu(2+) serves as cofactor. The cofactor is heme.

It is found in the cell membrane. The enzyme catalyses 4 Fe(II)-[cytochrome c] + O2 + 8 H(+)(in) = 4 Fe(III)-[cytochrome c] + 2 H2O + 4 H(+)(out). The protein operates within energy metabolism; oxidative phosphorylation. In terms of biological role, cytochrome c oxidase is the component of the respiratory chain that catalyzes the reduction of oxygen to water. Subunits 1-3 form the functional core of the enzyme complex. CO I is the catalytic subunit of the enzyme. Electrons originating in cytochrome c are transferred via the copper A center of subunit 2 and heme A of subunit 1 to the bimetallic center formed by heme A3 and copper B. This chain is Putative cytochrome c oxidase subunit 1-beta (ctaD2), found in Streptomyces coelicolor (strain ATCC BAA-471 / A3(2) / M145).